The sequence spans 365 residues: Heme A synthase (365 aa).

The next 8 membrane-spanning stretches (helical) occupy residues 17–37 (AVRIWLTVVAALIAVMVLVGG), 107–127 (VIGIAYLLPFLWFLWRGAIGP), 132–152 (ALWGIFALGALQGAVGWWMVA), 164–184 (VRLAVHLTLALIIYAAIVWTL), 203–223 (AIALLALTLLQLFLGALVAGL), 264–283 (QFDHRMMAYALWALAAWHAI), 296–316 (GALWLFAALSLQAVLGILTVL), and 320–340 (PIGLALAHQAVGIVVLTLAVL). Heme is bound at residue His-267. His-327 serves as a coordination point for heme.

It belongs to the COX15/CtaA family. Type 2 subfamily. As to quaternary structure, interacts with CtaB. Heme b is required as a cofactor.

It is found in the cell membrane. It catalyses the reaction Fe(II)-heme o + 2 A + H2O = Fe(II)-heme a + 2 AH2. Its pathway is porphyrin-containing compound metabolism; heme A biosynthesis; heme A from heme O: step 1/1. Functionally, catalyzes the conversion of heme O to heme A by two successive hydroxylations of the methyl group at C8. The first hydroxylation forms heme I, the second hydroxylation results in an unstable dihydroxymethyl group, which spontaneously dehydrates, resulting in the formyl group of heme A. This is Heme A synthase from Rhodopseudomonas palustris (strain HaA2).